An 835-amino-acid chain; its full sequence is Ion-translocating oxidoreductase complex subunit C (835 aa).

4Fe-4S ferredoxin-type domains follow at residues 368–397 (YAPP…QQLY) and 407–436 (KSEE…IQYF). Residues Cys377, Cys380, Cys383, Cys387, Cys416, Cys419, Cys422, and Cys426 each contribute to the [4Fe-4S] cluster site. Over residues 468 to 489 (AREEQERKARAQKAMEARRQEM) the composition is skewed to basic and acidic residues. Disordered regions lie at residues 468 to 492 (AREE…MKTA), 540 to 574 (QRKA…SKSA), 586 to 618 (KAAQ…AEDP), 634 to 666 (KAAQ…ADDP), 682 to 714 (KAAQ…ADDP), 730 to 762 (KAAQ…AEDP), and 778 to 811 (KAAQ…EDPR). The segment covering 552–561 (TQNTDVSQVE) has biased composition (polar residues). Over residues 648 to 657 (SSSNTLSVGN) the composition is skewed to polar residues. Composition is skewed to polar residues over residues 745–756 (SSDTLSVGNETE) and 793–804 (SSDTLSVGNETE).

It belongs to the 4Fe4S bacterial-type ferredoxin family. RnfC subfamily. The complex is composed of six subunits: RnfA, RnfB, RnfC, RnfD, RnfE and RnfG. [4Fe-4S] cluster serves as cofactor.

Its subcellular location is the cell inner membrane. Its function is as follows. Part of a membrane-bound complex that couples electron transfer with translocation of ions across the membrane. This chain is Ion-translocating oxidoreductase complex subunit C, found in Pasteurella multocida (strain Pm70).